Here is a 339-residue protein sequence, read N- to C-terminus: Ornithine carbamoyltransferase (339 aa).

Carbamoyl phosphate is bound by residues 56–59, R107, and 134–137; these read STRT and HPTQ. L-ornithine contacts are provided by residues N168, D232, and 236–237; that span reads SM. Residues 274-275 and R320 contribute to the carbamoyl phosphate site; that span reads CL.

This sequence belongs to the aspartate/ornithine carbamoyltransferase superfamily. OTCase family.

It localises to the cytoplasm. It carries out the reaction carbamoyl phosphate + L-ornithine = L-citrulline + phosphate + H(+). It functions in the pathway amino-acid biosynthesis; L-arginine biosynthesis; L-arginine from L-ornithine and carbamoyl phosphate: step 1/3. Reversibly catalyzes the transfer of the carbamoyl group from carbamoyl phosphate (CP) to the N(epsilon) atom of ornithine (ORN) to produce L-citrulline. This chain is Ornithine carbamoyltransferase, found in Buchnera aphidicola subsp. Baizongia pistaciae (strain Bp).